The sequence spans 417 residues: Serine hydroxymethyltransferase (417 aa).

Residues L121 and G125–L127 each bind (6S)-5,6,7,8-tetrahydrofolate. K229 bears the N6-(pyridoxal phosphate)lysine mark. Residue S355–F357 participates in (6S)-5,6,7,8-tetrahydrofolate binding.

It belongs to the SHMT family. In terms of assembly, homodimer. It depends on pyridoxal 5'-phosphate as a cofactor.

Its subcellular location is the cytoplasm. It catalyses the reaction (6R)-5,10-methylene-5,6,7,8-tetrahydrofolate + glycine + H2O = (6S)-5,6,7,8-tetrahydrofolate + L-serine. It functions in the pathway one-carbon metabolism; tetrahydrofolate interconversion. Its pathway is amino-acid biosynthesis; glycine biosynthesis; glycine from L-serine: step 1/1. In terms of biological role, catalyzes the reversible interconversion of serine and glycine with tetrahydrofolate (THF) serving as the one-carbon carrier. This reaction serves as the major source of one-carbon groups required for the biosynthesis of purines, thymidylate, methionine, and other important biomolecules. Also exhibits THF-independent aldolase activity toward beta-hydroxyamino acids, producing glycine and aldehydes, via a retro-aldol mechanism. In Xylella fastidiosa (strain M12), this protein is Serine hydroxymethyltransferase.